A 408-amino-acid chain; its full sequence is Glyceraldehyde-3-phosphate dehydrogenase, testis-specific (408 aa).

Positions 1-73 are testis-specific N-terminal extension; sequence MSKRDIVLTN…TPPPKMVSVA (73 aa). The interval 19-68 is disordered; that stretch reads QPCPVTRAPPPPEPKAEVEPQPQPEPTPVREEIKPPPPPLPPHPATPPPK. A compositionally biased stretch (pro residues) spans 53-68; that stretch reads PPPPPLPPHPATPPPK. NAD(+) is bound by residues 85–86, aspartate 106, lysine 151, tyrosine 173, and serine 193; that span reads RI. Residues 223 to 225, threonine 254, 283 to 284, and arginine 306 contribute to the D-glyceraldehyde 3-phosphate site; these read SCT and TG. The active-site Nucleophile is the cysteine 224. Asparagine 388 provides a ligand contact to NAD(+).

This sequence belongs to the glyceraldehyde-3-phosphate dehydrogenase family. Homotetramer. Interacts with ARRB2; the interaction is detected in the nucleus upon OR1D2 stimulation. In terms of tissue distribution, testis specific.

The protein resides in the cytoplasm. It carries out the reaction D-glyceraldehyde 3-phosphate + phosphate + NAD(+) = (2R)-3-phospho-glyceroyl phosphate + NADH + H(+). It functions in the pathway carbohydrate degradation; glycolysis; pyruvate from D-glyceraldehyde 3-phosphate: step 1/5. May play an important role in regulating the switch between different pathways for energy production during spermiogenesis and in the spermatozoon. Required for sperm motility and male fertility. The chain is Glyceraldehyde-3-phosphate dehydrogenase, testis-specific (GAPDHS) from Homo sapiens (Human).